The following is a 231-amino-acid chain: Small ribosomal subunit protein bS18c (231 aa).

2 disordered regions span residues 1-31 and 95-231; these read MEKSERPLIKKKRPFRKKKRSFRKRRSPIES and QKEE…TRKK. Residues 9–26 are compositionally biased toward basic residues; sequence IKKKRPFRKKKRSFRKRR. 3 stretches are compositionally biased toward basic and acidic residues: residues 95–151, 159–169, and 212–231; these read QKEE…EFQR, TNEKQTNEKQT, and TNEKQTKSNDRTTDLRTRKK.

The protein belongs to the bacterial ribosomal protein bS18 family. As to quaternary structure, part of the 30S ribosomal subunit.

Its subcellular location is the plastid. It is found in the chloroplast. The polypeptide is Small ribosomal subunit protein bS18c (Jasminum nudiflorum (Winter jasmine)).